The chain runs to 3011 residues: Chromodomain-helicase-DNA-binding protein 7 (3011 aa).

Disordered stretches follow at residues 90 to 146, 159 to 189, 202 to 422, 502 to 806, and 941 to 960; these read ISNA…SMWG, PYQQQQQQPQPTQPPQAPSGPPGQGHPQHMQ, MQQH…GSAG, QQLP…VEKI, and PEMERVERPPADDWKKSESS. A compositionally biased stretch (low complexity) spans 159–168; the sequence is PYQQQQQQPQ. Positions 169–179 are enriched in pro residues; sequence PTQPPQAPSGP. Positions 203–215 are enriched in low complexity; the sequence is QQHGQPQQQRMNQ. Composition is skewed to polar residues over residues 216–227, 241–258, 291–347, and 374–393; these read FSQGQEGLNQGN, VPQQNPSMAPSLRHSVQQ, QTLN…NQSV, and GSLNQMNTQTMHPSQPQGTY. Over residues 502–516 the composition is skewed to low complexity; sequence QQLPSQQQSFQQQMP. 2 stretches are compositionally biased toward polar residues: residues 576-586 and 630-641; these read TQVSGPNTQLV and DSQNLSRNSVDC. Composition is skewed to basic and acidic residues over residues 655–684 and 718–730; these read KKEPKDPKEPKEKKEPKTPKVPKTPKEPKE and KGKEGSENSDLDK. A compositionally biased stretch (basic residues) spans 747–759; it reads QKRRSSRQVKRKR. Basic and acidic residues predominate over residues 760-770; the sequence is YTEDLEFKISD. A compositionally biased stretch (polar residues) spans 783–795; sequence SPSNTSQSEQQES. 2 Chromo domains span residues 801–868 and 883–948; these read PVVE…GQNK and VEID…RVER. Positions 981 to 1155 constitute a Helicase ATP-binding domain; that stretch reads LFNWYNTRNC…FSLLHFLEPG (175 aa). 994 to 1001 contributes to the ATP binding site; sequence DEMGLGKT. Residues 1106–1109 carry the DEAH box motif; that stretch reads DEAH. The region spanning 1295 to 1465 is the Helicase C-terminal domain; the sequence is LIDKLLPKLK…LSKKEIEDLL (171 aa). 3 disordered regions span residues 1577 to 1602, 1836 to 1869, and 2136 to 2291; these read FSDLESDSEEKPSTKPRRPQDKSQGY, GTDMLADGGDGGEFDREDEDPEYKPTRTPFKDEI, and GTGN…GFYM. Over residues 1585 to 1597 the composition is skewed to basic and acidic residues; that stretch reads EEKPSTKPRRPQD. Residues 1845-1856 show a composition bias toward acidic residues; that stretch reads DGGEFDREDEDP. Residues 1857 to 1867 are compositionally biased toward basic and acidic residues; the sequence is EYKPTRTPFKD. Polar residues predominate over residues 2136 to 2145; the sequence is GTGNANTVSS. 2 stretches are compositionally biased toward basic and acidic residues: residues 2166–2207 and 2218–2238; these read QEEK…KQDC and CELKDIEMSTDVDPKSISEKG. Positions 2239 to 2253 are enriched in acidic residues; that stretch reads SEEDEEEKLDDDDKS. The stretch at 2403–2433 forms a coiled coil; sequence RRRRRKIEIEAERAAKRRNLMEMVAQLRESQ. Residue Ser2561 is modified to Phosphoserine. Disordered stretches follow at residues 2825 to 2900 and 2946 to 3011; these read TTGN…LPTN and GSNE…ENDE. The span at 2841–2851 shows a compositional bias: basic and acidic residues; the sequence is GASKAEEKKNE. Residues 2864-2877 are compositionally biased toward polar residues; it reads DTVSATDSANGSVS. Low complexity predominate over residues 2878 to 2893; that stretch reads AATAATTATATTTTTT. Residues 2948-2964 show a composition bias toward basic and acidic residues; the sequence is NEEKATDKTEGTAFKDE. 2 stretches are compositionally biased toward acidic residues: residues 2965-2974 and 2984-3011; these read ENLEGSDAEE and ILEDEIAQGEELDSLDGGEEIENNENDE.

Belongs to the SNF2/RAD54 helicase family. As to expression, expressed in the neural epithelium, otic placodes, optic placodes, branchial arches, and the olfactory placodes,.

It localises to the nucleus. The catalysed reaction is ATP + H2O = ADP + phosphate + H(+). ATP-dependent chromatin-remodeling factor, slides nucleosomes along DNA; nucleosome sliding requires ATP.Probable transcription regulator. Maybe involved in the in 45S precursor rRNA production. The sequence is that of Chromodomain-helicase-DNA-binding protein 7 (CHD7) from Gallus gallus (Chicken).